The chain runs to 153 residues: Putative trans-acting regulator pXO2-62/BXB0076/GBAA_pXO2_0076 (153 aa).

The protein belongs to the AtxA/AcpA family.

This chain is Putative trans-acting regulator pXO2-62/BXB0076/GBAA_pXO2_0076, found in Bacillus anthracis.